A 71-amino-acid chain; its full sequence is Phosphatidylinositol N-acetylglucosaminyltransferase ERI1 subunit (71 aa).

Helical transmembrane passes span 5–25 (VAAT…LWCL) and 35–55 (LYYW…CVIS).

In terms of assembly, interacts with GPI2, suggesting that it is a component of the GPI-GnT complex, probably composed of GPI1, GPI2, GPI3, GPI15, and ERI1.

It is found in the endoplasmic reticulum membrane. It participates in glycolipid biosynthesis; glycosylphosphatidylinositol-anchor biosynthesis. Functionally, probable component of the GPI-GlcNAc transferase (GPI-GnT) complex in the endoplasmic reticulum, a complex that catalyzes transfer of GlcNAc from UDP-GlcNAc to an acceptor phosphatidylinositol, the first step in the production of GPI-anchors for cell surface proteins. The chain is Phosphatidylinositol N-acetylglucosaminyltransferase ERI1 subunit (ERI1) from Eremothecium gossypii (strain ATCC 10895 / CBS 109.51 / FGSC 9923 / NRRL Y-1056) (Yeast).